Here is a 91-residue protein sequence, read N- to C-terminus: Cytochrome b-c1 complex subunit 10, mitochondrial (91 aa).

Residues 1–34 lie on the Mitochondrial matrix side of the membrane; it reads MFATSILRSAYPAYKSPYGPKYQYQPHIDGITPK. A helical transmembrane segment spans residues 35 to 58; that stretch reads QLVRILPTAAAWTGVALFAVVYYA. Residues 59 to 91 lie on the Mitochondrial intermembrane side of the membrane; it reads SGIPRLRRDVLQRIPYLGERYFVNEIPASDNPF.

It belongs to the UQCR11/QCR10 family. As to quaternary structure, component of the ubiquinol-cytochrome c oxidoreductase (cytochrome b-c1 complex, complex III, CIII), a multisubunit enzyme composed of 10 subunits. The complex is composed of 3 respiratory subunits cytochrome b (cob), cytochrome c1 (cyt-1) and Rieske protein (fes-1), 2 core protein subunits pep and ucr-1, and 5 low-molecular weight protein subunits qcr6, qcr7, qcr8, qcr9 and probably NCU16844/qcr10. The complex exists as an obligatory dimer and forms supercomplexes (SCs) in the inner mitochondrial membrane with NADH-ubiquinone oxidoreductase (complex I, CI) and cytochrome c oxidase (complex IV, CIV), resulting in different assemblies (supercomplexes SCI(1)III(2), SCIII(2)IV(1) and SCIII(2)IV(2) as well as higher order I(x)III(y)IV(z) megacomplexes).

It localises to the mitochondrion inner membrane. Component of the ubiquinol-cytochrome c oxidoreductase, a multisubunit transmembrane complex that is part of the mitochondrial electron transport chain which drives oxidative phosphorylation. The respiratory chain contains 3 multisubunit complexes succinate dehydrogenase (complex II, CII), ubiquinol-cytochrome c oxidoreductase (cytochrome b-c1 complex, complex III, CIII) and cytochrome c oxidase (complex IV, CIV), that cooperate to transfer electrons derived from NADH and succinate to molecular oxygen, creating an electrochemical gradient over the inner membrane that drives transmembrane transport and the ATP synthase. The cytochrome b-c1 complex catalyzes electron transfer from ubiquinol to cytochrome c, linking this redox reaction to translocation of protons across the mitochondrial inner membrane, with protons being carried across the membrane as hydrogens on the quinol. In the process called Q cycle, 2 protons are consumed from the matrix, 4 protons are released into the intermembrane space and 2 electrons are passed to cytochrome c. This chain is Cytochrome b-c1 complex subunit 10, mitochondrial, found in Neurospora crassa (strain ATCC 24698 / 74-OR23-1A / CBS 708.71 / DSM 1257 / FGSC 987).